The primary structure comprises 384 residues: MGMQMKNFKKMMTLMALCLSVAITTSGYATTLPDIPEPLKNGTGAIDNNGVIYVGLGTAGTSWYKIDLKKQHKDWERIKSFPGGAREQSVSVFLNDKLYVFGGVGKKNSESPLQVYSDVYKYSPVKNTWQKVDTISPVGLTGHTGVKLNETMVLITGGVNEHIFDKYFIDIAAADESEKNKVIYNYFNKPAKDYFFNKIVFIYNAKENTWKNAGELPGAGTAGSSSVMENNFLMLINGELKPGLRTDVIYRAMWDNDKLTWLKNSQLPPSPGEQQQEGLAGAFSGYSHGVLLVGGGANFPGAKQNYTNGKFYSHEGINKKWRDEVYGLINGHWQYMGKMKQPLGYGVSVSYGDEVFLIGGENAKGKPVSSVTSFTMRDGNLLIK.

The first 29 residues, 1-29 (MGMQMKNFKKMMTLMALCLSVAITTSGYA), serve as a signal peptide directing secretion. Kelch repeat units lie at residues 51-95 (VIYV…VFLN), 97-149 (KLYV…VKLN), 151-184 (TMVL…KVIY), 185-230 (NYFN…VMEN), 233-282 (LMLI…LAGA), 304-353 (QNYT…SYGD), and 355-384 (VFLI…LLIK). The active-site Proton acceptor is Glu239.

It belongs to the NanM family. In terms of assembly, homodimer.

It localises to the periplasm. The enzyme catalyses N-acetyl-alpha-neuraminate = N-acetyl-beta-neuraminate. Converts alpha-N-acetylneuranimic acid (Neu5Ac) to the beta-anomer, accelerating the equilibrium between the alpha- and beta-anomers. Probably facilitates sialidase-negative bacteria to compete successfully for limited amounts of extracellular Neu5Ac, which is likely taken up in the beta-anomer. In addition, the rapid removal of sialic acid from solution might be advantageous to the bacterium to damp down host responses. This Salmonella typhi protein is N-acetylneuraminate epimerase.